A 97-amino-acid polypeptide reads, in one-letter code: UPF0235 protein AZOSEA09540 (97 aa).

The protein belongs to the UPF0235 family.

The polypeptide is UPF0235 protein AZOSEA09540 (Aromatoleum aromaticum (strain DSM 19018 / LMG 30748 / EbN1) (Azoarcus sp. (strain EbN1))).